The following is a 119-amino-acid chain: Large ribosomal subunit protein bL20 (119 aa).

It belongs to the bacterial ribosomal protein bL20 family.

In terms of biological role, binds directly to 23S ribosomal RNA and is necessary for the in vitro assembly process of the 50S ribosomal subunit. It is not involved in the protein synthesizing functions of that subunit. The protein is Large ribosomal subunit protein bL20 of Bacillus licheniformis (strain ATCC 14580 / DSM 13 / JCM 2505 / CCUG 7422 / NBRC 12200 / NCIMB 9375 / NCTC 10341 / NRRL NRS-1264 / Gibson 46).